The sequence spans 431 residues: PHD finger-containing protein 1 (431 aa).

The segment at 7–59 (GPVCQTCGDIGFEEALVFCDSCMFESIHRYCLGITPIPFTEYITWICEDCDNS) adopts a PHD-type zinc-finger fold. Zn(2+) is bound by residues Cys10, Cys13, Cys25, Cys28, His34, Cys37, Cys53, and Cys56. Residues 125 to 221 (EAADSSSVPD…QESSDSRKPH (97 aa)) are disordered. Polar residues predominate over residues 128-139 (DSSSVPDHSSCT). A compositionally biased stretch (basic residues) spans 160–171 (KKKKKKKKKKSI). Residues 191 to 202 (VVEPVEVSSSSP) show a composition bias toward low complexity. A compositionally biased stretch (basic and acidic residues) spans 205-221 (ETMESKRQESSDSRKPH).

As to quaternary structure, interacts directly with AIPP3/BDT1.

Its function is as follows. Together with AIPP3/BDT1, cooperates to form a BAH-PHD bivalent histone reader complex able to read histone H3 lysine 27 trimethylation (H3K27me3) histone marks in order to regulate transcription, especially to prevent early flowering; promotes AIPP3/BDT1 binding to H3K27me3. The chain is PHD finger-containing protein 1 from Arabidopsis thaliana (Mouse-ear cress).